The sequence spans 257 residues: Adenosylcobinamide-GDP ribazoletransferase (257 aa).

6 consecutive transmembrane segments (helical) span residues 4 to 24, 40 to 60, 64 to 84, 116 to 136, 140 to 160, and 193 to 213; these read AVRG…WWLG, VVGL…QWFF, FVVQ…LLHL, AAVA…AALL, AALA…ALLI, and LFVT…VVAV.

It belongs to the CobS family. It depends on Mg(2+) as a cofactor.

Its subcellular location is the cell inner membrane. It catalyses the reaction alpha-ribazole + adenosylcob(III)inamide-GDP = adenosylcob(III)alamin + GMP + H(+). It carries out the reaction alpha-ribazole 5'-phosphate + adenosylcob(III)inamide-GDP = adenosylcob(III)alamin 5'-phosphate + GMP + H(+). Its pathway is cofactor biosynthesis; adenosylcobalamin biosynthesis; adenosylcobalamin from cob(II)yrinate a,c-diamide: step 7/7. In terms of biological role, joins adenosylcobinamide-GDP and alpha-ribazole to generate adenosylcobalamin (Ado-cobalamin). Also synthesizes adenosylcobalamin 5'-phosphate from adenosylcobinamide-GDP and alpha-ribazole 5'-phosphate. The polypeptide is Adenosylcobinamide-GDP ribazoletransferase (Alkalilimnicola ehrlichii (strain ATCC BAA-1101 / DSM 17681 / MLHE-1)).